The following is a 322-amino-acid chain: NADH-quinone oxidoreductase subunit H (322 aa).

Helical transmembrane passes span Ile14–Phe34, Tyr81–Ile101, Val114–Gly134, Ser149–Ala169, Leu186–Leu206, Phe237–Phe257, Phe265–Ile285, and Trp302–Ile322.

It belongs to the complex I subunit 1 family. In terms of assembly, NDH-1 is composed of 13 different subunits. Subunits NuoA, H, J, K, L, M, N constitute the membrane sector of the complex.

Its subcellular location is the cell inner membrane. The enzyme catalyses a quinone + NADH + 5 H(+)(in) = a quinol + NAD(+) + 4 H(+)(out). Functionally, NDH-1 shuttles electrons from NADH, via FMN and iron-sulfur (Fe-S) centers, to quinones in the respiratory chain. The immediate electron acceptor for the enzyme in this species is believed to be ubiquinone. Couples the redox reaction to proton translocation (for every two electrons transferred, four hydrogen ions are translocated across the cytoplasmic membrane), and thus conserves the redox energy in a proton gradient. This subunit may bind ubiquinone. The protein is NADH-quinone oxidoreductase subunit H of Blochmanniella floridana.